A 139-amino-acid chain; its full sequence is uncharacterized protein (139 aa).

The 62-residue stretch at 1–62 (MDDTDLQILS…NICYEKLNKH (62 aa)) folds into the HTH asnC-type domain. Residues 20–39 (MVELGKLVGLSSPSAAERVR) constitute a DNA-binding region (H-T-H motif).

This is an uncharacterized protein from Bacillus subtilis (strain 168).